The sequence spans 52 residues: Light-harvesting protein B-880 alpha chain (52 aa).

Over 1–12 the chain is Cytoplasmic; sequence MWKVWLLFDPRR. Residues 13 to 33 traverse the membrane as a helical segment; the sequence is TLVALFTFLFVLALLIHFILL. A bacteriochlorophyll is bound at residue H29. Topologically, residues 34–52 are periplasmic; that stretch reads STDRFNWMQGAPTAPAQTS.

It belongs to the antenna complex alpha subunit family. In terms of assembly, the core complex is formed by different alpha and beta chains, binding bacteriochlorophyll molecules, and arranged most probably in tetrameric structures disposed around the reaction center. The non-pigmented gamma chains may constitute additional components.

The protein resides in the cell inner membrane. Antenna complexes are light-harvesting systems, which transfer the excitation energy to the reaction centers. The protein is Light-harvesting protein B-880 alpha chain of Afifella marina (Rhodobium marinum).